Consider the following 288-residue polypeptide: Bifunctional protein FolD (288 aa).

Residues Gly166–Ser168 and Ile232 each bind NADP(+).

This sequence belongs to the tetrahydrofolate dehydrogenase/cyclohydrolase family. In terms of assembly, homodimer.

It carries out the reaction (6R)-5,10-methylene-5,6,7,8-tetrahydrofolate + NADP(+) = (6R)-5,10-methenyltetrahydrofolate + NADPH. The enzyme catalyses (6R)-5,10-methenyltetrahydrofolate + H2O = (6R)-10-formyltetrahydrofolate + H(+). It functions in the pathway one-carbon metabolism; tetrahydrofolate interconversion. Functionally, catalyzes the oxidation of 5,10-methylenetetrahydrofolate to 5,10-methenyltetrahydrofolate and then the hydrolysis of 5,10-methenyltetrahydrofolate to 10-formyltetrahydrofolate. This Salmonella enteritidis PT4 (strain P125109) protein is Bifunctional protein FolD.